The sequence spans 512 residues: GMP synthase [glutamine-hydrolyzing] (512 aa).

One can recognise a Glutamine amidotransferase type-1 domain in the interval 9-198 (GVLVVDFGGQ…WLSLVGAPRT (190 aa)). Cys87 (nucleophile) is an active-site residue. Catalysis depends on residues His173 and Glu175. A GMPS ATP-PPase domain is found at 199-387 (WRPGDMVSEL…LGVPRELIWK (189 aa)). Residue 226–232 (SGGVDST) participates in ATP binding.

It catalyses the reaction XMP + L-glutamine + ATP + H2O = GMP + L-glutamate + AMP + diphosphate + 2 H(+). The protein operates within purine metabolism; GMP biosynthesis; GMP from XMP (L-Gln route): step 1/1. Its function is as follows. Catalyzes the synthesis of GMP from XMP. This is GMP synthase [glutamine-hydrolyzing] (guaA) from Aeropyrum pernix (strain ATCC 700893 / DSM 11879 / JCM 9820 / NBRC 100138 / K1).